We begin with the raw amino-acid sequence, 1050 residues long: DNA polymerase I A, chloroplastic/mitochondrial (1050 aa).

The transit peptide at 1–91 directs the protein to the chloroplast and mitochondrion; it reads MAMGVSLTSH…VVFNGEWELR (91 aa). Residues 202 to 240 form a disordered region; that stretch reads PRKGLDVGDNMDVNPKGEGIQRPLISDKSSGTANGNKNT. Residues 228–240 show a composition bias toward polar residues; sequence DKSSGTANGNKNT. In terms of domain architecture, 3'-5' exonuclease spans 312–490; it reads ELICFSIYCG…LYESMTKKLQ (179 aa). Residues 673–694 form a disordered region; sequence VVEDDDVETSETQKSKTDDETD. The segment at 717–1048 is polymerase; sequence AIASLCEVCS…DAKCAQNWYA (332 aa).

The protein belongs to the DNA polymerase type-A family. In terms of tissue distribution, expressed in shoot apical meristem.

Its subcellular location is the plastid. The protein localises to the chloroplast. It is found in the mitochondrion. The catalysed reaction is DNA(n) + a 2'-deoxyribonucleoside 5'-triphosphate = DNA(n+1) + diphosphate. With respect to regulation, not inhibited by aphidicolin. Its function is as follows. In addition to polymerase activity, this DNA polymerase exhibits 5'-3' exonuclease activity. Required for DNA replication and accumulation in plastids and mitochondria. May be required for DNA repair in both organelles. The chain is DNA polymerase I A, chloroplastic/mitochondrial (POLIA) from Arabidopsis thaliana (Mouse-ear cress).